A 493-amino-acid chain; its full sequence is ATP synthase subunit beta, chloroplastic (493 aa).

Position 170–177 (170–177) interacts with ATP; the sequence is GGAGVGKT.

It belongs to the ATPase alpha/beta chains family. In terms of assembly, F-type ATPases have 2 components, CF(1) - the catalytic core - and CF(0) - the membrane proton channel. CF(1) has five subunits: alpha(3), beta(3), gamma(1), delta(1), epsilon(1). CF(0) has four main subunits: a(1), b(1), b'(1) and c(9-12).

Its subcellular location is the plastid. The protein localises to the chloroplast thylakoid membrane. The enzyme catalyses ATP + H2O + 4 H(+)(in) = ADP + phosphate + 5 H(+)(out). In terms of biological role, produces ATP from ADP in the presence of a proton gradient across the membrane. The catalytic sites are hosted primarily by the beta subunits. The polypeptide is ATP synthase subunit beta, chloroplastic (Lachenalia pusilla (Cape cowslips)).